We begin with the raw amino-acid sequence, 736 residues long: Elongation factor 2 (736 aa).

The 217-residue stretch at 18-234 (TRVRNIGIIA…VIDAYTASDK (217 aa)) folds into the tr-type G domain. GTP-binding positions include 27-34 (AHVDHGKT), 93-97 (DTPGH), and 147-150 (NKVD). Histidine 603 carries the diphthamide modification.

This sequence belongs to the TRAFAC class translation factor GTPase superfamily. Classic translation factor GTPase family. EF-G/EF-2 subfamily.

The protein resides in the cytoplasm. Catalyzes the GTP-dependent ribosomal translocation step during translation elongation. During this step, the ribosome changes from the pre-translocational (PRE) to the post-translocational (POST) state as the newly formed A-site-bound peptidyl-tRNA and P-site-bound deacylated tRNA move to the P and E sites, respectively. Catalyzes the coordinated movement of the two tRNA molecules, the mRNA and conformational changes in the ribosome. In Saccharolobus islandicus (strain Y.N.15.51 / Yellowstone #2) (Sulfolobus islandicus), this protein is Elongation factor 2.